Here is a 316-residue protein sequence, read N- to C-terminus: Phospholipase A1 2 (316 aa).

Positions Ala-1–Leu-4 are cleaved as a signal peptide. The propeptide occupies Thr-5–Arg-14. Cys-20 and Cys-103 are disulfide-bonded. Ser-153 functions as the Nucleophile in the catalytic mechanism. Residue Asp-181 is the Charge relay system of the active site. Intrachain disulfides connect Cys-192–Cys-197 and Cys-235–Cys-240. Residue His-242 is the Charge relay system of the active site. 3 disulfides stabilise this stretch: Cys-257/Cys-284, Cys-258/Cys-309, and Cys-277/Cys-282.

It belongs to the AB hydrolase superfamily. Lipase family. As to expression, expressed by the venom gland.

Its subcellular location is the secreted. It carries out the reaction a 1,2-diacyl-sn-glycero-3-phosphocholine + H2O = a 2-acyl-sn-glycero-3-phosphocholine + a fatty acid + H(+). Functionally, catalyzes the hydrolysis of phosphatidylcholine with phospholipase A1 activity. May act as an allergen and induce hemolytic activity. The polypeptide is Phospholipase A1 2 (Polistes dominula (European paper wasp)).